We begin with the raw amino-acid sequence, 300 residues long: Ribosomal RNA small subunit methyltransferase A (300 aa).

S-adenosyl-L-methionine-binding residues include N36, V38, G63, E84, D113, and N131.

It belongs to the class I-like SAM-binding methyltransferase superfamily. rRNA adenine N(6)-methyltransferase family. RsmA subfamily.

The protein resides in the cytoplasm. It carries out the reaction adenosine(1518)/adenosine(1519) in 16S rRNA + 4 S-adenosyl-L-methionine = N(6)-dimethyladenosine(1518)/N(6)-dimethyladenosine(1519) in 16S rRNA + 4 S-adenosyl-L-homocysteine + 4 H(+). In terms of biological role, specifically dimethylates two adjacent adenosines (A1518 and A1519) in the loop of a conserved hairpin near the 3'-end of 16S rRNA in the 30S particle. May play a critical role in biogenesis of 30S subunits. This chain is Ribosomal RNA small subunit methyltransferase A, found in Kineococcus radiotolerans (strain ATCC BAA-149 / DSM 14245 / SRS30216).